We begin with the raw amino-acid sequence, 451 residues long: Protein NINJA homolog 1 (451 aa).

3 disordered regions span residues Met-1–Pro-223, Ile-321–Lys-346, and Asp-427–Asn-451. Positions Lys-23–Pro-35 are enriched in basic and acidic residues. Polar residues-rich tracts occupy residues Glu-38 to Pro-49, Pro-86 to Val-103, and Ile-143 to Gly-153. The span at Glu-154–Ala-163 shows a compositional bias: acidic residues. Residues Ser-207 to Gly-216 show a composition bias toward low complexity.

Belongs to the Ninja family. Interacts with TIFY10C/JAZ8. Interacts with TIFY11A/JAZ9.

The protein resides in the nucleus. In Oryza sativa subsp. japonica (Rice), this protein is Protein NINJA homolog 1.